The primary structure comprises 358 residues: Uroporphyrinogen decarboxylase (358 aa).

Residues 29-33 (RQAGR), Phe48, Asp79, Tyr155, Ser210, and His330 contribute to the substrate site.

The protein belongs to the uroporphyrinogen decarboxylase family. Homodimer.

It localises to the cytoplasm. It catalyses the reaction uroporphyrinogen III + 4 H(+) = coproporphyrinogen III + 4 CO2. Its pathway is porphyrin-containing compound metabolism; protoporphyrin-IX biosynthesis; coproporphyrinogen-III from 5-aminolevulinate: step 4/4. In terms of biological role, catalyzes the decarboxylation of four acetate groups of uroporphyrinogen-III to yield coproporphyrinogen-III. This is Uroporphyrinogen decarboxylase from Bordetella pertussis (strain Tohama I / ATCC BAA-589 / NCTC 13251).